The sequence spans 388 residues: Isocitrate dehydrogenase [NAD] subunit 1, mitochondrial (388 aa).

The N-terminal 35 residues, 1–35 (MFSLRTAQPAQSLFRAATNTYSTSLPRSAIAARSF), are a transit peptide targeting the mitochondrion. The substrate site is built by arginine 137, arginine 168, and aspartate 255. Aspartate 255 is a binding site for Mg(2+).

Belongs to the isocitrate and isopropylmalate dehydrogenases family. As to quaternary structure, octamer of two non-identical subunits IDH1 and IDH2. Requires Mg(2+) as cofactor. Mn(2+) serves as cofactor.

The protein localises to the mitochondrion. It catalyses the reaction D-threo-isocitrate + NAD(+) = 2-oxoglutarate + CO2 + NADH. Performs an essential role in the oxidative function of the citric acid cycle. The polypeptide is Isocitrate dehydrogenase [NAD] subunit 1, mitochondrial (IDH1) (Ajellomyces capsulatus (Darling's disease fungus)).